A 217-amino-acid polypeptide reads, in one-letter code: Pyrophosphatase PpaX (217 aa).

The active-site Nucleophile is aspartate 11.

The protein belongs to the HAD-like hydrolase superfamily. PpaX family. Mg(2+) is required as a cofactor.

The catalysed reaction is diphosphate + H2O = 2 phosphate + H(+). Hydrolyzes pyrophosphate formed during P-Ser-HPr dephosphorylation by HPrK/P. Might play a role in controlling the intracellular pyrophosphate pool. This Listeria innocua serovar 6a (strain ATCC BAA-680 / CLIP 11262) protein is Pyrophosphatase PpaX.